Here is a 238-residue protein sequence, read N- to C-terminus: Ribosomal RNA small subunit methyltransferase G (238 aa).

S-adenosyl-L-methionine contacts are provided by residues G77, F82, A128–E129, and R147.

Belongs to the methyltransferase superfamily. RNA methyltransferase RsmG family.

The protein localises to the cytoplasm. Its function is as follows. Specifically methylates the N7 position of guanine in position 535 of 16S rRNA. This is Ribosomal RNA small subunit methyltransferase G from Exiguobacterium sp. (strain ATCC BAA-1283 / AT1b).